Reading from the N-terminus, the 98-residue chain is Acylphosphatase (98 aa).

The region spanning 12-98 (TYYVRVRGVV…ERRFERFQQQ (87 aa)) is the Acylphosphatase-like domain. Residues R27 and N45 contribute to the active site.

The protein belongs to the acylphosphatase family.

It catalyses the reaction an acyl phosphate + H2O = a carboxylate + phosphate + H(+). The sequence is that of Acylphosphatase (acyP) from Burkholderia lata (strain ATCC 17760 / DSM 23089 / LMG 22485 / NCIMB 9086 / R18194 / 383).